A 1105-amino-acid polypeptide reads, in one-letter code: uncharacterized protein (1105 aa).

It belongs to the mycobacterial PPE family.

This is an uncharacterized protein from Mycobacterium tuberculosis (strain CDC 1551 / Oshkosh).